Here is a 176-residue protein sequence, read N- to C-terminus: Retinol-binding protein 4-B (176 aa).

Ser-1 carries the N-acetylserine modification. Intrachain disulfides connect Cys-3–Cys-159, Cys-69–Cys-173, and Cys-119–Cys-128. Residue Gln-97 coordinates substrate.

It belongs to the calycin superfamily. Lipocalin family.

It localises to the secreted. In terms of biological role, RBP delivers retinol from the liver stores to the peripheral tissues. In plasma, the RBP-retinol complex interacts with transthyretin, this prevents its loss by filtration through the kidney glomeruli. The polypeptide is Retinol-binding protein 4-B (rbp4b) (Oncorhynchus mykiss (Rainbow trout)).